The following is a 279-amino-acid chain: Sulfur carrier protein FdhD (279 aa).

Residue Cys122 is the Cysteine persulfide intermediate of the active site.

This sequence belongs to the FdhD family.

The protein localises to the cytoplasm. Functionally, required for formate dehydrogenase (FDH) activity. Acts as a sulfur carrier protein that transfers sulfur from IscS to the molybdenum cofactor prior to its insertion into FDH. This is Sulfur carrier protein FdhD from Thermoplasma volcanium (strain ATCC 51530 / DSM 4299 / JCM 9571 / NBRC 15438 / GSS1).